We begin with the raw amino-acid sequence, 269 residues long: Ubiquinone/menaquinone biosynthesis C-methyltransferase UbiE (269 aa).

Residues Thr-92, Asp-113, and 141–142 (NA) each bind S-adenosyl-L-methionine.

Belongs to the class I-like SAM-binding methyltransferase superfamily. MenG/UbiE family.

It catalyses the reaction a 2-demethylmenaquinol + S-adenosyl-L-methionine = a menaquinol + S-adenosyl-L-homocysteine + H(+). The catalysed reaction is a 2-methoxy-6-(all-trans-polyprenyl)benzene-1,4-diol + S-adenosyl-L-methionine = a 5-methoxy-2-methyl-3-(all-trans-polyprenyl)benzene-1,4-diol + S-adenosyl-L-homocysteine + H(+). It functions in the pathway quinol/quinone metabolism; menaquinone biosynthesis; menaquinol from 1,4-dihydroxy-2-naphthoate: step 2/2. Its pathway is cofactor biosynthesis; ubiquinone biosynthesis. In terms of biological role, methyltransferase required for the conversion of demethylmenaquinol (DMKH2) to menaquinol (MKH2) and the conversion of 2-polyprenyl-6-methoxy-1,4-benzoquinol (DDMQH2) to 2-polyprenyl-3-methyl-6-methoxy-1,4-benzoquinol (DMQH2). This Brucella canis (strain ATCC 23365 / NCTC 10854 / RM-666) protein is Ubiquinone/menaquinone biosynthesis C-methyltransferase UbiE.